Consider the following 192-residue polypeptide: MADILLLDNIDSFTYNLVDQLRSSGHRVVIYRNHIAADNIIERLQQLEQPVLMLSPGPGTPAQAGCMPELLQRLQGQLPMIGICLGHQAIIEAYGGHVGQAGEILHGKASAIEHDGQGMFAGMPNPLPVARYHSLVGSNLPAELTVNARFGEMVMAVRHDAHRVCGYQFHPESILTTHGARLLEQTLAWALA.

One can recognise a Glutamine amidotransferase type-1 domain in the interval 3-192; sequence DILLLDNIDS…LEQTLAWALA (190 aa). 57–59 serves as a coordination point for L-glutamine; the sequence is GPG. C84 serves as the catalytic Nucleophile; for GATase activity. Residues Q88 and 134-135 contribute to the L-glutamine site; that span reads SL. Active-site for GATase activity residues include H170 and E172.

In terms of assembly, heterotetramer consisting of two non-identical subunits: a beta subunit (TrpG) and a large alpha subunit (TrpE).

The catalysed reaction is chorismate + L-glutamine = anthranilate + pyruvate + L-glutamate + H(+). The protein operates within amino-acid biosynthesis; L-tryptophan biosynthesis; L-tryptophan from chorismate: step 1/5. In terms of biological role, part of a heterotetrameric complex that catalyzes the two-step biosynthesis of anthranilate, an intermediate in the biosynthesis of L-tryptophan. In the first step, the glutamine-binding beta subunit (TrpG) of anthranilate synthase (AS) provides the glutamine amidotransferase activity which generates ammonia as a substrate that, along with chorismate, is used in the second step, catalyzed by the large alpha subunit of AS (TrpE) to produce anthranilate. In the absence of TrpG, TrpE can synthesize anthranilate directly from chorismate and high concentrations of ammonia. The sequence is that of Anthranilate synthase component 2 (trpG) from Yersinia pestis.